The following is a 348-amino-acid chain: Peptidyl-Lys metalloendopeptidase (348 aa).

The signal sequence occupies residues 1–18; sequence MFSSVMVALVSLAVAVSA. Residues 19 to 181 constitute a propeptide that is removed on maturation; sequence NPGLSLKVSG…RATPTLTRPV (163 aa). Disulfide bonds link cysteine 186–cysteine 256 and cysteine 258–cysteine 278. O-linked (Man) threonine; partial glycosylation occurs at threonine 223. Histidine 298 is a Zn(2+) binding site. Glutamate 299 is an active-site residue. Residues histidine 302 and aspartate 311 each contribute to the Zn(2+) site.

The cofactor is Zn(2+).

It localises to the secreted. It carries out the reaction Preferential cleavage in proteins: -Xaa-|-Lys- (in which Xaa may be Pro).. Its activity is regulated as follows. Inhibited by chelating agents such as EDTA and 1,10-phenanthroline. The protein is Peptidyl-Lys metalloendopeptidase (MEP) of Grifola frondosa (Maitake).